The sequence spans 917 residues: Dolichyl-phosphooligosaccharide-protein glycotransferase (917 aa).

Residues 1–10 (MTENNEKVKN) show a composition bias toward basic and acidic residues. The disordered stretch occupies residues 1-20 (MTENNEKVKNSDSANNQSSK). Over 1 to 38 (MTENNEKVKNSDSANNQSSKNSKFNFNFEDKKVKCAKT) the chain is Cytoplasmic. The span at 11 to 20 (SDSANNQSSK) shows a compositional bias: low complexity. The helical transmembrane segment at 39 to 59 (ILIIIFLAFLSFQMRAQTADM) threads the bilayer. Over 60–154 (GFTTNEQYLD…AMDSTVTLMN (95 aa)) the chain is Extracellular. The DXD motif 1 signature appears at 82–84 (ALD). D84 is a Mn(2+) binding site. A helical transmembrane segment spans residues 155–175 (AAFWVPAILSMFLITPIFFTV). Topologically, residues 176–182 (RRITSSD) are cytoplasmic. A helical membrane pass occupies residues 183 to 203 (IGGAVAAILASLSPSIFVKTV). Topologically, residues 204-209 (AGFSDT) are extracellular. A Mn(2+)-binding site is contributed by D208. The DXD motif 2 motif lies at 208–210 (DTP). The chain crosses the membrane as a helical span at residues 210–230 (PILEILPLLFIVWFIIEAIHY). Residues 231-237 (SKEKNYK) are Cytoplasmic-facing. A helical transmembrane segment spans residues 238–260 (SLIYGLLATLMLALYPFMWSAWW). The Extracellular portion of the chain corresponds to 261–263 (YGY). A helical membrane pass occupies residues 264–286 (YIVIAFLVIYAIYKGISYNSIAK). Over 287–308 (YTKSKNNNHKDKIESEKLEMLN) the chain is Cytoplasmic. Residues 309–329 (ILKISGLFIIGGAVLITALYG) traverse the membrane as a helical segment. The Extracellular portion of the chain corresponds to 330–372 (VSTTMNALQAPLNYLGLDEVSSQTGWPNVLTTVSELDTASLDE). Residues 361–364 (TVSE) carry the TIXE motif motif. E364 provides a ligand contact to Mn(2+). Residues 373–393 (IISSSLGSIHLFAIGLIGIFL) traverse the membrane as a helical segment. Over 394–413 (SLFRKVLTPVKQISNGLAEK) the chain is Cytoplasmic. A helical membrane pass occupies residues 414–434 (LDIKYALLLIIWFAVTFLAAS). The Extracellular segment spans residues 435-438 (KGVR). An a glycophospholipid-binding site is contributed by R438. Residues 439 to 459 (FVALMVPPLSIGVGIFVGFIE) traverse the membrane as a helical segment. The Cytoplasmic portion of the chain corresponds to 460–469 (QFIKNNLDKK). Residues 470-490 (YEYVAYPTIAIIVLYALFTIY) traverse the membrane as a helical segment. At 491–506 (RADSADLVRMLLPSNY) the chain is on the extracellular side. A helical membrane pass occupies residues 507 to 527 (VPIAEGIMLASLAVLIIYKVA). The Cytoplasmic segment spans residues 528–541 (ELIAESNKKLVMNK). A helical membrane pass occupies residues 542–562 (IFMILLAIGLITPTIATIVPF). Residues 563–917 (YSVPTYNDGW…FSVDYGNYSK (355 aa)) lie on the Extracellular side of the membrane. Positions 592-594 (WWD) are interacts with target acceptor peptide in protein substrate. A WWDYG motif motif is present at residues 592-596 (WWDNG). Positions 719–726 (MTSIASVW) match the MI motif motif.

Belongs to the STT3 family. Mn(2+) is required as a cofactor. The cofactor is Mg(2+).

The protein resides in the cell membrane. The enzyme catalyses an archaeal dolichyl phosphooligosaccharide + [protein]-L-asparagine = an archaeal dolichyl phosphate + a glycoprotein with the oligosaccharide chain attached by N-beta-D-glycosyl linkage to a protein L-asparagine.. It functions in the pathway cell surface structure biogenesis; S-layer biogenesis. Its pathway is protein modification; protein glycosylation. In terms of biological role, oligosaccharyl transferase (OST) that catalyzes the initial transfer of a defined glycan (ManNAcGlc-2,3-diNAcAGlcNAc in M.voltae) from the lipid carrier dolichol-monophosphate to an asparagine residue within an Asn-X-Ser/Thr consensus motif in nascent polypeptide chains, the first step in protein N-glycosylation. Involved in the assembly of an N-linked disaccharide that decorates the S-layer glycoprotein and flagellins. The polypeptide is Dolichyl-phosphooligosaccharide-protein glycotransferase (Methanococcus voltae).